The sequence spans 328 residues: Methionyl-tRNA formyltransferase (328 aa).

110 to 113 (SLLP) lines the (6S)-5,6,7,8-tetrahydrofolate pocket.

Belongs to the Fmt family.

It carries out the reaction L-methionyl-tRNA(fMet) + (6R)-10-formyltetrahydrofolate = N-formyl-L-methionyl-tRNA(fMet) + (6S)-5,6,7,8-tetrahydrofolate + H(+). Its function is as follows. Attaches a formyl group to the free amino group of methionyl-tRNA(fMet). The formyl group appears to play a dual role in the initiator identity of N-formylmethionyl-tRNA by promoting its recognition by IF2 and preventing the misappropriation of this tRNA by the elongation apparatus. The polypeptide is Methionyl-tRNA formyltransferase (Prochlorococcus marinus (strain AS9601)).